The chain runs to 323 residues: Fatty acid desaturase 4, chloroplastic (323 aa).

The transit peptide at 1–77 directs the protein to the chloroplast; the sequence is MAVSLPTKYP…PRPNREKLVV (77 aa). Helical transmembrane passes span 101–121 and 131–151; these read WVAA…IGGF and LAGY…HWAI. The Histidine box-1 motif lies at 170–173; sequence QGHH. A helical membrane pass occupies residues 204-224; that stretch reads LAFNDPVFHGFVCTFAFCILF. The Histidine box-2 motif lies at 229–233; it reads HAWAH. Residues 258–262 carry the Histidine box-3 motif; that stretch reads HAEHH.

It belongs to the fatty acid desaturase CarF family. Fe(2+) is required as a cofactor.

The protein localises to the plastid. It is found in the chloroplast membrane. It carries out the reaction a 1-acyl-2-hexadecanoyl-glycerolipid + 2 reduced [2Fe-2S]-[ferredoxin] + O2 + 2 H(+) = a 1-acyl-2-[(3E)-hexadec-3-enoyl]-glycerolipid + 2 oxidized [2Fe-2S]-[ferredoxin] + 2 H2O. The protein operates within lipid metabolism; fatty acid metabolism. In terms of biological role, fatty acid desaturase involved in the production of chloroplast-specific phosphatidylglycerol molecular species containing 16:1(3E). Catalyzes the formation of a trans double bond introduced close to the carboxyl group of palmitic acid, which is specifically esterified to the sn-2 glyceryl carbon of phosphatidylglycerol. This Arabidopsis thaliana (Mouse-ear cress) protein is Fatty acid desaturase 4, chloroplastic.